Here is a 261-residue protein sequence, read N- to C-terminus: Carnitinyl-CoA dehydratase (261 aa).

Glu-111 functions as the Nucleophile in the catalytic mechanism. The active-site Proton acceptor is Glu-131.

This sequence belongs to the enoyl-CoA hydratase/isomerase family.

The catalysed reaction is (R)-carnitinyl-CoA = crotonobetainyl-CoA + H2O. Its pathway is amine and polyamine metabolism; carnitine metabolism. Functionally, catalyzes the reversible dehydration of L-carnitinyl-CoA to crotonobetainyl-CoA. The protein is Carnitinyl-CoA dehydratase of Salmonella dublin (strain CT_02021853).